A 203-amino-acid polypeptide reads, in one-letter code: ADP-ribosylation factor-like protein 6-interacting protein 1 (203 aa).

Over 1-41 (MAEGDNRSSNLLAVETASLEEQLQGWGEVMLMADKVLRWER) the chain is Cytoplasmic. Residues 42–62 (AWFPPAIMGVVSLLFLIIYYL) traverse the membrane as a helical segment. Over 63–65 (DPS) the chain is Lumenal. Residues 66-86 (VLSGVSCFVMFLCLADYLVPI) traverse the membrane as a helical segment. The Cytoplasmic portion of the chain corresponds to 87 to 133 (LAPRIFGSNKWTTEQQQRFHEICSNLVKTRRRAVGWWKRLFSLKEEK). The chain crosses the membrane as a helical span at residues 134 to 175 (PKMYFMTMIISLAAVAWVGQQVHNLLLTYLIVTFVLLLPGLN). Residues 176–203 (QHGIILKYIGMAKREINKLLKQKEKKNE) are Lumenal-facing.

This sequence belongs to the ARL6ip family. As to quaternary structure, homooligomer. Heterodimer with ARL6IP5. Interacts with ARL6. Interacts with TMEM33. Interacts with ATL1. In terms of tissue distribution, expressed in the cerebral cortex, cerebellum, hippocampus, olfactory bulbs, medulla oblongate and limbic system (at protein level). Ubiquitous. Expressed in all hematopoietic cell lineages, with highest levels in early myeloid progenitor cells.

The protein resides in the endomembrane system. Its subcellular location is the endoplasmic reticulum membrane. The protein localises to the endoplasmic reticulum. In terms of biological role, positively regulates SLC1A1/EAAC1-mediated glutamate transport by increasing its affinity for glutamate in a PKC activity-dependent manner. Promotes the catalytic efficiency of SLC1A1/EAAC1 probably by reducing its interaction with ARL6IP5, a negative regulator of SLC1A1/EAAC1-mediated glutamate transport. Plays a role in the formation and stabilization of endoplasmic reticulum tubules. Negatively regulates apoptosis, possibly by modulating the activity of caspase-9 (CASP9). Inhibits cleavage of CASP9-dependent substrates and downstream markers of apoptosis but not CASP9 itself. May be involved in protein transport, membrane trafficking, or cell signaling during hematopoietic maturation. The polypeptide is ADP-ribosylation factor-like protein 6-interacting protein 1 (Arl6ip1) (Mus musculus (Mouse)).